We begin with the raw amino-acid sequence, 843 residues long: Probable disease resistance protein At5g47250 (843 aa).

A coiled-coil region spans residues M28–E58. The 300-residue stretch at T141–G440 folds into the NB-ARC domain. ATP is bound at residue G183–T190. LRR repeat units lie at residues T510–P531, N535–V556, T559–L581, S583–L604, and K606–Q628.

Belongs to the disease resistance NB-LRR family.

Probable disease resistance protein. The sequence is that of Probable disease resistance protein At5g47250 from Arabidopsis thaliana (Mouse-ear cress).